Reading from the N-terminus, the 291-residue chain is Heterogeneous nuclear ribonucleoprotein D-like-B (291 aa).

RRM domains follow at residues 34 to 116 (SKMF…QGKE) and 119 to 196 (KKVF…AAQP). The tract at residues 196 to 226 (PKEVYRQQQQKQQKGGRGGTRGRGRGQGYSN) is disordered. Residues 210–222 (GGRGGTRGRGRGQ) show a composition bias toward gly residues.

The protein resides in the nucleus. It localises to the cytoplasm. Functionally, acts as a transcriptional regulator. Binds DNA and RNA. The protein is Heterogeneous nuclear ribonucleoprotein D-like-B (hnrnpdl-b) of Xenopus laevis (African clawed frog).